The primary structure comprises 53 residues: Rubredoxin (53 aa).

One can recognise a Rubredoxin-like domain in the interval 1-53 (MQKYVCDICGYVYDPAVGDPDNGVAPGTAFADLPEDWVCPECGVSKDEFSPEA). 4 residues coordinate Fe cation: Cys-6, Cys-9, Cys-39, and Cys-42.

The protein belongs to the rubredoxin family. The cofactor is Fe(3+).

Functionally, rubredoxin is a small nonheme, iron protein lacking acid-labile sulfide. Its single Fe, chelated to 4 Cys, functions as an electron acceptor and may also stabilize the conformation of the molecule. In Butyribacterium methylotrophicum, this protein is Rubredoxin.